The sequence spans 67 residues: uncharacterized protein (67 aa).

2 consecutive transmembrane segments (helical) span residues 8-28 and 41-61; these read MWFA…IYLS and ISSF…VVVF.

The protein resides in the cell membrane. This is an uncharacterized protein from Bacillus subtilis (strain 168).